A 662-amino-acid polypeptide reads, in one-letter code: Glutathione hydrolase 7 (662 aa).

Over 1–106 the chain is Cytoplasmic; the sequence is MAAENEASQE…AAECSCRQDG (106 aa). Phosphoserine occurs at positions 17, 72, 79, and 83. Positions 26-90 are disordered; sequence SFPRLPEDEP…DGSPLRETRK (65 aa). Residues 72–83 are compositionally biased toward low complexity; sequence SSSSEMGSQDGS. Residues 107 to 127 traverse the membrane as a helical; Signal-anchor for type II membrane protein segment; it reads LTVIVTACLTFATGVTVALVM. Over 128-662 the chain is Extracellular; that stretch reads QIYFGDPQIF…SPDAAGATIL (535 aa). Residues asparagine 198, asparagine 267, asparagine 283, asparagine 330, asparagine 353, asparagine 394, asparagine 452, asparagine 519, asparagine 523, and asparagine 586 are each glycosylated (N-linked (GlcNAc...) asparagine).

The protein belongs to the gamma-glutamyltransferase family. Interacts with TLCD3A. In terms of assembly, heterodimer composed of the light and heavy chains. The active site is located in the light chain. Cleaved by autocatalysis into a large and a small subunit and the autocatalytic cleavage is essential to the functional activation of the enzyme. Widely expressed, but at low level, except in the airway epithelial cells. Detected in brain, heart, kidney, liver, lung, spleen, testis and trachea.

Its subcellular location is the membrane. It catalyses the reaction an N-terminal (5-L-glutamyl)-[peptide] + an alpha-amino acid = 5-L-glutamyl amino acid + an N-terminal L-alpha-aminoacyl-[peptide]. The catalysed reaction is glutathione + H2O = L-cysteinylglycine + L-glutamate. The enzyme catalyses an S-substituted glutathione + H2O = an S-substituted L-cysteinylglycine + L-glutamate. It functions in the pathway sulfur metabolism; glutathione metabolism. Its function is as follows. Hydrolyzes and transfers gamma-glutamyl moieties from glutathione and other gamma-glutamyl compounds to acceptors. The sequence is that of Glutathione hydrolase 7 from Homo sapiens (Human).